We begin with the raw amino-acid sequence, 134 residues long: Profilin-3 (134 aa).

Cys-13 and Cys-118 are oxidised to a cystine. Positions 84-100 (AVIRGKKGSGGITIKKT) match the Involved in PIP2 interaction motif. Residue Thr-114 is modified to Phosphothreonine.

This sequence belongs to the profilin family. Occurs in many kinds of cells as a complex with monomeric actin in a 1:1 ratio. In terms of processing, phosphorylated by MAP kinases.

The protein localises to the cytoplasm. It localises to the cytoskeleton. Its function is as follows. Binds to actin and affects the structure of the cytoskeleton. At high concentrations, profilin prevents the polymerization of actin, whereas it enhances it at low concentrations. This Olea europaea (Common olive) protein is Profilin-3.